Reading from the N-terminus, the 359-residue chain is Chondroadherin (359 aa).

The signal sequence occupies residues 1 to 22; that stretch reads MVRPMLLLSLGLLAGLLPALAA. Cys23 and Cys38 are disulfide-bonded. In terms of domain architecture, LRRNT spans 23-52; that stretch reads CPQNCHCHSDLQHVICDKVGLQKIPKVSEK. 9 LRR repeats span residues 76–97, 100–121, 124–145, 148–169, 172–193, 196–217, 220–241, 245–266, and 269–290; these read NLVS…AFRG, QLIY…AFDD, ELTY…LLSP, NLFI…AFQG, DLRW…ALDD, NLAK…ALSK, VVEE…AFQS, YLET…AFLG, and TLKH…FPFD. Ser144 is a glycosylation site (O-linked (GalNAc...) serine). Residues 300–348 form the LRRCT domain; it reads NPWKCTCQLRGLRRWLEAKASRPDATCASPAKFKGQHIRDTDAFRSCKF. Cystine bridges form between Cys304-Cys346 and Cys306-Cys326.

This sequence belongs to the small leucine-rich proteoglycan (SLRP) family. SLRP class IV subfamily. In terms of assembly, mostly monomeric. Interacts with collagen type II. In terms of tissue distribution, present in chondrocytes at all ages.

It is found in the secreted. Its subcellular location is the extracellular space. The protein localises to the extracellular matrix. Promotes attachment of chondrocytes, fibroblasts, and osteoblasts. This binding is mediated (at least for chondrocytes and fibroblasts) by the integrin alpha(2)beta(1). May play an important role in the regulation of chondrocyte growth and proliferation. In Homo sapiens (Human), this protein is Chondroadherin (CHAD).